The chain runs to 206 residues: Small ribosomal subunit protein uS4 (206 aa).

Residues 96 to 158 form the S4 RNA-binding domain; sequence GRLDNVVYRM…AKQQSRIKAA (63 aa).

Belongs to the universal ribosomal protein uS4 family. Part of the 30S ribosomal subunit. Contacts protein S5. The interaction surface between S4 and S5 is involved in control of translational fidelity.

One of the primary rRNA binding proteins, it binds directly to 16S rRNA where it nucleates assembly of the body of the 30S subunit. Its function is as follows. With S5 and S12 plays an important role in translational accuracy. This chain is Small ribosomal subunit protein uS4, found in Vibrio atlanticus (strain LGP32) (Vibrio splendidus (strain Mel32)).